A 139-amino-acid polypeptide reads, in one-letter code: D-ribose pyranase (139 aa).

His20 acts as the Proton donor in catalysis. Residues Asp28, His106, and Tyr128 to Asn130 contribute to the substrate site.

The protein belongs to the RbsD / FucU family. RbsD subfamily. As to quaternary structure, homodecamer.

It is found in the cytoplasm. It catalyses the reaction beta-D-ribopyranose = beta-D-ribofuranose. The protein operates within carbohydrate metabolism; D-ribose degradation; D-ribose 5-phosphate from beta-D-ribopyranose: step 1/2. Functionally, catalyzes the interconversion of beta-pyran and beta-furan forms of D-ribose. The chain is D-ribose pyranase from Histophilus somni (strain 2336) (Haemophilus somnus).